Reading from the N-terminus, the 304-residue chain is Protein PagO (304 aa).

A run of 10 helical transmembrane segments spans residues valine 4 to methionine 24, valine 34 to leucine 54, leucine 67 to glycine 87, leucine 95 to leucine 115, alanine 119 to leucine 139, tryptophan 150 to cysteine 170, isoleucine 180 to phenylalanine 200, isoleucine 214 to alanine 234, leucine 246 to alanine 266, and isoleucine 267 to valine 287. 2 EamA domains span residues leucine 15–leucine 139 and leucine 161–valine 287.

Belongs to the EamA transporter family.

Its subcellular location is the cell membrane. In Salmonella typhimurium (strain LT2 / SGSC1412 / ATCC 700720), this protein is Protein PagO (pagO).